The chain runs to 110 residues: Translation initiation factor 1A 3 (110 aa).

Positions methionine 1–lysine 29 are disordered. A compositionally biased stretch (low complexity) spans serine 7–asparagine 18. Residues threonine 22–threonine 96 enclose the S1-like domain.

Belongs to the eIF-1A family.

Functionally, seems to be required for maximal rate of protein biosynthesis. Enhances ribosome dissociation into subunits and stabilizes the binding of the initiator Met-tRNA(I) to 40 S ribosomal subunits. This chain is Translation initiation factor 1A 3 (eIF1A3), found in Methanosarcina acetivorans (strain ATCC 35395 / DSM 2834 / JCM 12185 / C2A).